A 129-amino-acid polypeptide reads, in one-letter code: Small ribosomal subunit protein uS11 (129 aa).

It belongs to the universal ribosomal protein uS11 family. In terms of assembly, part of the 30S ribosomal subunit. Interacts with proteins S7 and S18. Binds to IF-3.

Located on the platform of the 30S subunit, it bridges several disparate RNA helices of the 16S rRNA. Forms part of the Shine-Dalgarno cleft in the 70S ribosome. This chain is Small ribosomal subunit protein uS11, found in Mycoplasma mycoides subsp. mycoides SC (strain CCUG 32753 / NCTC 10114 / PG1).